Here is a 357-residue protein sequence, read N- to C-terminus: Histidine biosynthesis bifunctional protein HisB (357 aa).

The segment at 1-167 is histidinol-phosphatase; the sequence is MNDKILFIDR…IHKYLMQNSH (167 aa). Asp9 (nucleophile) is an active-site residue. Mg(2+) is bound by residues Asp9 and Asp11. Asp11 (proton donor) is an active-site residue. Zn(2+) contacts are provided by Cys93, His95, Cys101, and Cys103. Asp130 provides a ligand contact to Mg(2+). An imidazoleglycerol-phosphate dehydratase region spans residues 168-357; the sequence is RVAHIQRITN…QIPSSKGILL (190 aa).

It in the N-terminal section; belongs to the histidinol-phosphatase family. In the C-terminal section; belongs to the imidazoleglycerol-phosphate dehydratase family. Requires Mg(2+) as cofactor. It depends on Zn(2+) as a cofactor.

The protein localises to the cytoplasm. The enzyme catalyses D-erythro-1-(imidazol-4-yl)glycerol 3-phosphate = 3-(imidazol-4-yl)-2-oxopropyl phosphate + H2O. It catalyses the reaction L-histidinol phosphate + H2O = L-histidinol + phosphate. The protein operates within amino-acid biosynthesis; L-histidine biosynthesis; L-histidine from 5-phospho-alpha-D-ribose 1-diphosphate: step 6/9. It participates in amino-acid biosynthesis; L-histidine biosynthesis; L-histidine from 5-phospho-alpha-D-ribose 1-diphosphate: step 8/9. The sequence is that of Histidine biosynthesis bifunctional protein HisB from Blochmanniella floridana.